The sequence spans 178 residues: Beta-lactoglobulin-1A/1C (178 aa).

The first 18 residues, 1–18 (MRCLLLTLGLALLCGVQA), serve as a signal peptide directing secretion. 2 disulfide bridges follow: cysteine 84/cysteine 176 and cysteine 124/cysteine 137.

This sequence belongs to the calycin superfamily. Lipocalin family. Under physiological conditions beta-lactoglobulin exists as an equilibrium mixture of monomeric and dimeric forms.

Its subcellular location is the secreted. Its function is as follows. Lactoglobulin is the primary component of whey, it binds retinol and is probably involved in the transport of that molecule. The polypeptide is Beta-lactoglobulin-1A/1C (Sus scrofa (Pig)).